Reading from the N-terminus, the 410-residue chain is Protein translocase subunit SecY 2 (410 aa).

10 consecutive transmembrane segments (helical) span residues 2 to 22, 45 to 65, 94 to 114, 125 to 145, 147 to 167, 188 to 208, 241 to 261, 284 to 304, 339 to 359, and 366 to 386; these read ILIIYRALFFVTIPGVNSAAL, FSIMSLGVTAYITAQIIVQLL, LTLVLGLVQATGITLGINTLT, FTIIVIAVSMTAGSFIAMWLG, LITENGLGNGISVIITAGILV, WIRFSELMIGAAILILLIVWF, VIPVIFASTIMTIPQTILMFF, GVIIYGLMIIFFEYLYSIVQI, YLSLPGSLFLMLVSIIPLLVA, and LQIGLSGSSILIITGVLIEIG.

The protein belongs to the SecY/SEC61-alpha family. Component of the Sec protein translocase complex. Heterotrimer consisting of SecY, SecE and SecG subunits. The heterotrimers can form oligomers, although 1 heterotrimer is thought to be able to translocate proteins. Interacts with the ribosome. Interacts with SecDF, and other proteins may be involved. Interacts with SecA.

Its subcellular location is the cell membrane. In terms of biological role, the central subunit of the protein translocation channel SecYEG. Consists of two halves formed by TMs 1-5 and 6-10. These two domains form a lateral gate at the front which open onto the bilayer between TMs 2 and 7, and are clamped together by SecE at the back. The channel is closed by both a pore ring composed of hydrophobic SecY resides and a short helix (helix 2A) on the extracellular side of the membrane which forms a plug. The plug probably moves laterally to allow the channel to open. The ring and the pore may move independently. In Lactobacillus kefiranofaciens subsp. kefiranofaciens, this protein is Protein translocase subunit SecY 2.